An 870-amino-acid polypeptide reads, in one-letter code: Importin subunit beta-1 (870 aa).

Residue Ala2 is modified to N-acetylalanine. HEAT repeat units lie at residues 4-33 (EVTQ…FQEQ), 35-67 (LAGF…KNAL), 87-126 (MSTK…ELPQ), 132-161 (LIVS…LCEE), 172-204 (VNKI…YMAL), 214-249 (DMER…IAST), 255-304 (AHYM…EFAG), 313-361 (FTKQ…RAVG), 365-395 (VPHV…GSIL), 403-440 (LMAI…IFEF), 456-492 (CQQI…EDIG), 498-535 (TPFF…EVVR), 542-588 (STMV…QVII), 596-637 (TKSK…AYAA), 642-679 (AKYM…CRAL), 684-722 (LPYC…ALAI), 730-776 (WRYS…FQGF), and 826-868 (SHVG…TRAI). An Importin N-terminal domain is found at 23–103 (AEESLKQFQE…RAFLLKTLSA (81 aa)).

Belongs to the importin beta family. Importin beta-1 subfamily. As to quaternary structure, forms a complex with the importin subunits alpha IMPA1 or IMPA2, the nucleoporin NUP62 and the Ran-GTP-binding proteins RAN1, RAN2 or RAN3. In terms of tissue distribution, expressed in roots, cotyledons, leaves, stems, petals, stamen, stigma, siliques, embryos and guard cells.

The protein localises to the cytoplasm. Its subcellular location is the nucleus. Its function is as follows. Acts as a negative effector of drought tolerance. Involved in the regulation of stomatal closure and in the abscisic acid (ABA)-mediated pathway that lead to drought tolerance. Does not directly mediate nuclear import of ABI1 and ABI2 which are key regulators of the ABA signaling pathway. May be involved in nuclear translocation of other type 2C protein phosphatases that mediate ABA signaling. The chain is Importin subunit beta-1 from Arabidopsis thaliana (Mouse-ear cress).